The sequence spans 785 residues: Protein PHTF2 (785 aa).

The PHTF domain occupies 46–191 (IQCLIGAYDQ…VHCQIVSTRT (146 aa)). 2 helical membrane-spanning segments follow: residues 136–156 (VIFFWLLVLYLLQVAAIVLFC) and 164–184 (IPLTEVIGPIWLMLLLGTVHC). Disordered regions lie at residues 190–239 (RTPK…GTST) and 304–401 (RPEE…PESE). The segment covering 200 to 209 (GKRRRKLRKA) has biased composition (basic residues). A compositionally biased stretch (basic and acidic residues) spans 210–219 (AHLEVHREGD). 2 stretches are compositionally biased toward polar residues: residues 220 to 239 (GSSTTDNTQEGAVQNHGTST) and 309 to 333 (AWNTGTLRNGPSKDTQRTITNVSDE). N-linked (GlcNAc...) asparagine glycosylation occurs at Asn329. The segment covering 359 to 369 (RNRKSHHYKKH) has biased composition (basic residues). Positions 378–390 (SGTSCSSRCSSSR) are enriched in low complexity. Residues 391-400 (QDSESARPES) are compositionally biased toward basic and acidic residues. Transmembrane regions (helical) follow at residues 497–517 (IGYQIFGNAVSLILGLTPFVF), 553–573 (VIISFVVRVSLVWIFFFLLCV), 634–654 (VIVSSAFLLTISVVFICCAQL), and 668–688 (WELVIWCISLTLFLLRFVTLG). Residues Asn697 and Asn756 are each glycosylated (N-linked (GlcNAc...) asparagine). The chain crosses the membrane as a helical span at residues 760-780 (VVILSAVSGVISDLLGFNLKL).

Its subcellular location is the membrane. The protein is Protein PHTF2 (PHTF2) of Homo sapiens (Human).